The primary structure comprises 553 residues: Coiled-coil domain-containing protein 22 homolog (553 aa).

Residues 236–264 (DSEEPAPPPISTVKPDASAEEEASPIQEL) form a disordered region. Coiled coils occupy residues 261-286 (IQEL…KAHA), 314-407 (ERTS…QSLA), and 498-549 (NVTK…VEQP).

The protein belongs to the CCDC22 family.

The sequence is that of Coiled-coil domain-containing protein 22 homolog from Drosophila erecta (Fruit fly).